A 353-amino-acid chain; its full sequence is Feruloyl esterase B (353 aa).

The first 18 residues, 1–18 (MAIPLVLVLAWLLPVVLA), serve as a signal peptide directing secretion. Positions 19–291 (ASLTQVNNFG…VSVVLDWFGI (273 aa)) are catalytic. S136 serves as the catalytic Charge relay system. 2 N-linked (GlcNAc...) asparagine glycosylation sites follow: N179 and N246. Residues 317-353 (CTAAHWAQCGGIGYSGCTACASPYTCQKANDYYSQCL) form the CBM1 domain.

It belongs to the carbohydrate esterase 1 (CE1) family. Feruloyl esterase type B subfamily. Post-translationally, glycosylated.

Its subcellular location is the secreted. It carries out the reaction feruloyl-polysaccharide + H2O = ferulate + polysaccharide.. With respect to regulation, inhibited by the specific serine esterase inhibitor AEBSF. In terms of biological role, involved in degradation of plant cell walls. Hydrolyzes the feruloyl-arabinose ester bond in arabinoxylans, and the feruloyl-galactose and feruloyl-arabinose ester bonds in pectin. Binds strongly to cellulose. In Talaromyces funiculosus (Fruitlet core rot fungus), this protein is Feruloyl esterase B (FAEB).